The chain runs to 224 residues: Thiamine-phosphate synthase (224 aa).

4-amino-2-methyl-5-(diphosphooxymethyl)pyrimidine-binding positions include 44–48 (QFREK) and N79. Mg(2+)-binding residues include D80 and D99. S117 is a binding site for 4-amino-2-methyl-5-(diphosphooxymethyl)pyrimidine. Residue 143–145 (TST) coordinates 2-[(2R,5Z)-2-carboxy-4-methylthiazol-5(2H)-ylidene]ethyl phosphate. Residue K146 coordinates 4-amino-2-methyl-5-(diphosphooxymethyl)pyrimidine. Residues G175 and 195 to 196 (IS) each bind 2-[(2R,5Z)-2-carboxy-4-methylthiazol-5(2H)-ylidene]ethyl phosphate.

The protein belongs to the thiamine-phosphate synthase family. It depends on Mg(2+) as a cofactor.

It carries out the reaction 2-[(2R,5Z)-2-carboxy-4-methylthiazol-5(2H)-ylidene]ethyl phosphate + 4-amino-2-methyl-5-(diphosphooxymethyl)pyrimidine + 2 H(+) = thiamine phosphate + CO2 + diphosphate. The enzyme catalyses 2-(2-carboxy-4-methylthiazol-5-yl)ethyl phosphate + 4-amino-2-methyl-5-(diphosphooxymethyl)pyrimidine + 2 H(+) = thiamine phosphate + CO2 + diphosphate. It catalyses the reaction 4-methyl-5-(2-phosphooxyethyl)-thiazole + 4-amino-2-methyl-5-(diphosphooxymethyl)pyrimidine + H(+) = thiamine phosphate + diphosphate. Its pathway is cofactor biosynthesis; thiamine diphosphate biosynthesis; thiamine phosphate from 4-amino-2-methyl-5-diphosphomethylpyrimidine and 4-methyl-5-(2-phosphoethyl)-thiazole: step 1/1. Its function is as follows. Condenses 4-methyl-5-(beta-hydroxyethyl)thiazole monophosphate (THZ-P) and 2-methyl-4-amino-5-hydroxymethyl pyrimidine pyrophosphate (HMP-PP) to form thiamine monophosphate (TMP). The protein is Thiamine-phosphate synthase of Bacillus cereus (strain ATCC 10987 / NRS 248).